The following is a 445-amino-acid chain: 3-phosphoshikimate 1-carboxyvinyltransferase (445 aa).

Positions 21, 22, and 26 each coordinate 3-phosphoshikimate. Lysine 21 is a binding site for phosphoenolpyruvate. 2 residues coordinate phosphoenolpyruvate: glycine 92 and arginine 120. Residues serine 165, glutamine 166, aspartate 307, and lysine 334 each coordinate 3-phosphoshikimate. Glutamine 166 lines the phosphoenolpyruvate pocket. Catalysis depends on aspartate 307, which acts as the Proton acceptor. Positions 338, 379, and 405 each coordinate phosphoenolpyruvate.

It belongs to the EPSP synthase family. Monomer.

The protein resides in the cytoplasm. The catalysed reaction is 3-phosphoshikimate + phosphoenolpyruvate = 5-O-(1-carboxyvinyl)-3-phosphoshikimate + phosphate. It functions in the pathway metabolic intermediate biosynthesis; chorismate biosynthesis; chorismate from D-erythrose 4-phosphate and phosphoenolpyruvate: step 6/7. Catalyzes the transfer of the enolpyruvyl moiety of phosphoenolpyruvate (PEP) to the 5-hydroxyl of shikimate-3-phosphate (S3P) to produce enolpyruvyl shikimate-3-phosphate and inorganic phosphate. This is 3-phosphoshikimate 1-carboxyvinyltransferase from Chlamydia felis (strain Fe/C-56) (Chlamydophila felis).